The following is a 324-amino-acid chain: 4-diphosphocytidyl-2-C-methyl-D-erythritol kinase (324 aa).

The active site involves K11. An ATP-binding site is contributed by 108–118 (PIGAGLAGGST). The active site involves D150.

This sequence belongs to the GHMP kinase family. IspE subfamily.

The catalysed reaction is 4-CDP-2-C-methyl-D-erythritol + ATP = 4-CDP-2-C-methyl-D-erythritol 2-phosphate + ADP + H(+). The protein operates within isoprenoid biosynthesis; isopentenyl diphosphate biosynthesis via DXP pathway; isopentenyl diphosphate from 1-deoxy-D-xylulose 5-phosphate: step 3/6. Functionally, catalyzes the phosphorylation of the position 2 hydroxy group of 4-diphosphocytidyl-2C-methyl-D-erythritol. In Cyanothece sp. (strain PCC 7425 / ATCC 29141), this protein is 4-diphosphocytidyl-2-C-methyl-D-erythritol kinase.